We begin with the raw amino-acid sequence, 400 residues long: 1-deoxy-D-xylulose 5-phosphate reductoisomerase (400 aa).

5 residues coordinate NADPH: Thr-17, Gly-18, Ser-19, Ile-20, and Asn-131. Lys-132 contacts 1-deoxy-D-xylulose 5-phosphate. Glu-133 provides a ligand contact to NADPH. Residue Asp-157 coordinates Mn(2+). 1-deoxy-D-xylulose 5-phosphate is bound by residues Ser-158, Glu-159, Ser-188, and His-211. Glu-159 lines the Mn(2+) pocket. Position 217 (Gly-217) interacts with NADPH. The 1-deoxy-D-xylulose 5-phosphate site is built by Ser-224, Asn-229, Lys-230, and Glu-233. Glu-233 contacts Mn(2+).

This sequence belongs to the DXR family. The cofactor is Mg(2+). Mn(2+) is required as a cofactor.

The enzyme catalyses 2-C-methyl-D-erythritol 4-phosphate + NADP(+) = 1-deoxy-D-xylulose 5-phosphate + NADPH + H(+). Its pathway is isoprenoid biosynthesis; isopentenyl diphosphate biosynthesis via DXP pathway; isopentenyl diphosphate from 1-deoxy-D-xylulose 5-phosphate: step 1/6. Its function is as follows. Catalyzes the NADPH-dependent rearrangement and reduction of 1-deoxy-D-xylulose-5-phosphate (DXP) to 2-C-methyl-D-erythritol 4-phosphate (MEP). In Pseudomonas putida (strain ATCC 47054 / DSM 6125 / CFBP 8728 / NCIMB 11950 / KT2440), this protein is 1-deoxy-D-xylulose 5-phosphate reductoisomerase.